The sequence spans 528 residues: Tyrosine--tRNA ligase, cytoplasmic (528 aa).

Tyr-39 provides a ligand contact to L-tyrosine. Residues Thr-44–Tyr-52 carry the 'HIGH' region motif. L-tyrosine contacts are provided by Tyr-166, Gln-170, Asp-173, and Gln-188. The 'KMSKS' region motif lies at Lys-222–Ser-226. The Nuclear localization signal signature appears at Lys-242–Lys-247. Residues Glu-332–Glu-362 form a disordered region. The 105-residue stretch at Asp-364 to Tyr-468 folds into the tRNA-binding domain.

Belongs to the class-I aminoacyl-tRNA synthetase family. Homodimer.

It localises to the cytoplasm. The protein resides in the nucleus. It carries out the reaction tRNA(Tyr) + L-tyrosine + ATP = L-tyrosyl-tRNA(Tyr) + AMP + diphosphate + H(+). Catalyzes the attachment of tyrosine to tRNA(Tyr) in a two-step reaction: tyrosine is first activated by ATP to form Tyr-AMP and then transferred to the acceptor end of tRNA(Tyr). This chain is Tyrosine--tRNA ligase, cytoplasmic (yars1), found in Xenopus laevis (African clawed frog).